The chain runs to 154 residues: Protein X (154 aa).

The segment at 68–117 (PCALRFTSARRMETTVNAHRNLPKVLHKRTLGLSAMSTTDLEAYFKDCVF) is mitochondrial targeting sequence.

This sequence belongs to the orthohepadnavirus protein X family. As to quaternary structure, may form homodimer. May interact with host CEBPA, CFLAR, CREB1, DDB1, E4F1, HBXIP, HSPD1/HSP60, NFKBIA, POLR2E and SMAD4. Interacts with host SMC5-SMC6 complex and induces its degradation. Interacts with host TRPC4AP; leading to prevent ubiquitination of TRPC4AP. Interacts with host PLSCR1; this interaction promotes ubiquitination and degradation of HBx and impairs HBx-mediated cell proliferation. A fraction may be phosphorylated in insect cells and HepG2 cells, a human hepatoblastoma cell line. Phosphorylated in vitro by host protein kinase C or mitogen-activated protein kinase. N-acetylated in insect cells.

The protein resides in the host cytoplasm. Its subcellular location is the host nucleus. The protein localises to the host mitochondrion. Multifunctional protein that plays a role in silencing host antiviral defenses and promoting viral transcription. Does not seem to be essential for HBV infection. May be directly involved in development of cirrhosis and liver cancer (hepatocellular carcinoma). Most of cytosolic activities involve modulation of cytosolic calcium. The effect on apoptosis is controversial depending on the cell types in which the studies have been conducted. May induce apoptosis by localizing in mitochondria and causing loss of mitochondrial membrane potential. May also modulate apoptosis by binding host CFLAR, a key regulator of the death-inducing signaling complex (DISC). Promotes viral transcription by using the host E3 ubiquitin ligase DDB1 to target the SMC5-SMC6 complex to proteasomal degradation. This host complex would otherwise bind to viral episomal DNA, and prevents its transcription. Moderately stimulates transcription of many different viral and cellular transcription elements. Promoters and enhancers stimulated by HBx contain DNA binding sites for NF-kappa-B, AP-1, AP-2, c-EBP, ATF/CREB, or the calcium-activated factor NF-AT. The chain is Protein X from Homo sapiens (Human).